We begin with the raw amino-acid sequence, 396 residues long: Ornithine aminotransferase (396 aa).

Lysine 255 bears the N6-(pyridoxal phosphate)lysine mark.

It belongs to the class-III pyridoxal-phosphate-dependent aminotransferase family. OAT subfamily. Pyridoxal 5'-phosphate serves as cofactor.

It is found in the cytoplasm. The enzyme catalyses a 2-oxocarboxylate + L-ornithine = L-glutamate 5-semialdehyde + an L-alpha-amino acid. It participates in amino-acid biosynthesis; L-proline biosynthesis; L-glutamate 5-semialdehyde from L-ornithine: step 1/1. Functionally, catalyzes the interconversion of ornithine to glutamate semialdehyde. The protein is Ornithine aminotransferase of Staphylococcus epidermidis (strain ATCC 12228 / FDA PCI 1200).